Consider the following 471-residue polypeptide: Heat shock 70 kDa protein 13 (471 aa).

A signal peptide spans 1–22; sequence MAGEMTILGSAVLTLLLAGYLA. N-linked (GlcNAc...) asparagine glycosylation occurs at asparagine 184. The interval 316 to 339 is disordered; that stretch reads NDSQKPQNADSKLPEDQLTPGDGH.

This sequence belongs to the heat shock protein 70 family. Binds UBQLN2.

The protein resides in the microsome. The protein localises to the endoplasmic reticulum. Functionally, has peptide-independent ATPase activity. The protein is Heat shock 70 kDa protein 13 (Hspa13) of Rattus norvegicus (Rat).